The sequence spans 329 residues: Putative GTPase Obg (329 aa).

Positions 1 to 159 (MQFIDQARIM…WPLQLELKLL (159 aa)) constitute an Obg domain. Residues 160 to 328 (AEVGIIGLPN…LKTQIWQQLG (169 aa)) form the OBG-type G domain. Residues 166 to 173 (GLPNAGKS), 191 to 195 (FTTLI), 213 to 216 (DIPG), 280 to 283 (SKIE), and 309 to 311 (SSA) contribute to the GTP site. The Mg(2+) site is built by S173 and T193.

The protein belongs to the TRAFAC class OBG-HflX-like GTPase superfamily. OBG GTPase family. Monomer. Requires Mg(2+) as cofactor.

Its subcellular location is the plastid. The protein resides in the organellar chromatophore. An essential GTPase which binds GTP, GDP and possibly (p)ppGpp with moderate affinity, with high nucleotide exchange rates and a fairly low GTP hydrolysis rate. The polypeptide is Putative GTPase Obg (Paulinella chromatophora).